We begin with the raw amino-acid sequence, 233 residues long: tRNA (guanine-N(1)-)-methyltransferase (233 aa).

S-adenosyl-L-methionine contacts are provided by residues G113 and 133-138; that span reads IGDYVL.

The protein belongs to the RNA methyltransferase TrmD family. Homodimer.

It is found in the cytoplasm. It carries out the reaction guanosine(37) in tRNA + S-adenosyl-L-methionine = N(1)-methylguanosine(37) in tRNA + S-adenosyl-L-homocysteine + H(+). Functionally, specifically methylates guanosine-37 in various tRNAs. In Ruminiclostridium cellulolyticum (strain ATCC 35319 / DSM 5812 / JCM 6584 / H10) (Clostridium cellulolyticum), this protein is tRNA (guanine-N(1)-)-methyltransferase.